A 286-amino-acid chain; its full sequence is Shikimate dehydrogenase (NADP(+)) (286 aa).

Residues 20–22 (SLS) and threonine 65 each bind shikimate. The active-site Proton acceptor is the lysine 69. Aspartate 81 provides a ligand contact to NADP(+). Shikimate contacts are provided by asparagine 90 and aspartate 105. NADP(+) is bound by residues 128-132 (GAGGA) and threonine 217. Tyrosine 219 is a binding site for shikimate. Residue glycine 240 coordinates NADP(+).

It belongs to the shikimate dehydrogenase family. As to quaternary structure, homodimer.

The enzyme catalyses shikimate + NADP(+) = 3-dehydroshikimate + NADPH + H(+). It functions in the pathway metabolic intermediate biosynthesis; chorismate biosynthesis; chorismate from D-erythrose 4-phosphate and phosphoenolpyruvate: step 4/7. Functionally, involved in the biosynthesis of the chorismate, which leads to the biosynthesis of aromatic amino acids. Catalyzes the reversible NADPH linked reduction of 3-dehydroshikimate (DHSA) to yield shikimate (SA). This is Shikimate dehydrogenase (NADP(+)) from Syntrophobacter fumaroxidans (strain DSM 10017 / MPOB).